A 237-amino-acid polypeptide reads, in one-letter code: NAD(P)H-hydrate epimerase (237 aa).

The YjeF N-terminal domain maps to 11–223 (AASLDRDLMN…GLDIPEYPGV (213 aa)). 61 to 65 (NNGGD) lines the (6S)-NADPHX pocket. Residues asparagine 62 and aspartate 123 each coordinate K(+). Residues 127-133 (GFSFSGP) and aspartate 156 each bind (6S)-NADPHX. Serine 159 lines the K(+) pocket.

It belongs to the NnrE/AIBP family. K(+) is required as a cofactor.

Its subcellular location is the cytoplasm. The protein resides in the mitochondrion. The catalysed reaction is (6R)-NADHX = (6S)-NADHX. It catalyses the reaction (6R)-NADPHX = (6S)-NADPHX. Its function is as follows. Catalyzes the epimerization of the S- and R-forms of NAD(P)HX, a damaged form of NAD(P)H that is a result of enzymatic or heat-dependent hydration. This is a prerequisite for the S-specific NAD(P)H-hydrate dehydratase to allow the repair of both epimers of NAD(P)HX. In Ajellomyces capsulatus (strain G186AR / H82 / ATCC MYA-2454 / RMSCC 2432) (Darling's disease fungus), this protein is NAD(P)H-hydrate epimerase.